The following is a 142-amino-acid chain: Matrix protein (142 aa).

Residues 64–66 (DVE) and alanine 117 contribute to the GMP site.

In terms of assembly, homooligomer. Homotetramer. Interacts with phosphoprotein P. Binds to ssRNA. Not glycosylated.

The protein localises to the virion. Its subcellular location is the host cytoplasm. It localises to the host cell membrane. Functionally, plays a crucial role in virion assembly and budding. In Bos taurus (Bovine), this protein is Matrix protein (M).